The sequence spans 432 residues: 3-phosphoshikimate 1-carboxyvinyltransferase (432 aa).

Positions 23, 24, and 28 each coordinate 3-phosphoshikimate. Phosphoenolpyruvate is bound at residue K23. G99 and R127 together coordinate phosphoenolpyruvate. 3-phosphoshikimate-binding residues include S172, S173, Q174, S200, D317, N341, and K345. Q174 lines the phosphoenolpyruvate pocket. The active-site Proton acceptor is D317. Positions 349, 391, and 416 each coordinate phosphoenolpyruvate.

It belongs to the EPSP synthase family. In terms of assembly, monomer.

It is found in the cytoplasm. It carries out the reaction 3-phosphoshikimate + phosphoenolpyruvate = 5-O-(1-carboxyvinyl)-3-phosphoshikimate + phosphate. It participates in metabolic intermediate biosynthesis; chorismate biosynthesis; chorismate from D-erythrose 4-phosphate and phosphoenolpyruvate: step 6/7. Its function is as follows. Catalyzes the transfer of the enolpyruvyl moiety of phosphoenolpyruvate (PEP) to the 5-hydroxyl of shikimate-3-phosphate (S3P) to produce enolpyruvyl shikimate-3-phosphate and inorganic phosphate. This chain is 3-phosphoshikimate 1-carboxyvinyltransferase, found in Blochmanniella pennsylvanica (strain BPEN).